The primary structure comprises 405 residues: Serine/threonine transporter SstT (405 aa).

Helical transmembrane passes span 13–33 (GNLVLQILAGILLGAAMATFS), 43–63 (IGNLFVGALKAVAPVLVFILV), 81–101 (IVVLYLFGTFSAALTAVILSF), 140–160 (ALMNANYIGILAWGVGLGLAL), 191–211 (FGIFGLVASTFATTGFDALAG), 215–235 (LLAVLLGAMAFIALVVNPMIV), 297–317 (MAGAAITITVLTLAAVHTMGI), 338–358 (ASGVAGGSLLLIPLACGLFGI), and 362–382 (IAMQVVAVGFIIGVIQDSAET).

This sequence belongs to the dicarboxylate/amino acid:cation symporter (DAACS) (TC 2.A.23) family.

It is found in the cell inner membrane. The enzyme catalyses L-serine(in) + Na(+)(in) = L-serine(out) + Na(+)(out). It catalyses the reaction L-threonine(in) + Na(+)(in) = L-threonine(out) + Na(+)(out). Functionally, involved in the import of serine and threonine into the cell, with the concomitant import of sodium (symport system). The polypeptide is Serine/threonine transporter SstT (Vibrio cholerae serotype O1 (strain ATCC 39315 / El Tor Inaba N16961)).